A 690-amino-acid chain; its full sequence is UvrABC system protein C (690 aa).

Positions 1–60 are disordered; sequence MTTDSSDPAKPAGPGQPPGSGADTRPGGLATGQDVDPATIETDEDDEARLPDVPDEPTDA. A compositionally biased stretch (acidic residues) spans 41–58; the sequence is ETDEDDEARLPDVPDEPT. Residues 82 to 160 enclose the GIY-YIG domain; that stretch reads TSPGVYRMMN…IKQLRPRFNV (79 aa). The UVR domain occupies 270–305; the sequence is RAVKEELAREMEKASGDLAFERAALYRDRLAALSAI.

This sequence belongs to the UvrC family. As to quaternary structure, interacts with UvrB in an incision complex.

The protein resides in the cytoplasm. Its function is as follows. The UvrABC repair system catalyzes the recognition and processing of DNA lesions. UvrC both incises the 5' and 3' sides of the lesion. The N-terminal half is responsible for the 3' incision and the C-terminal half is responsible for the 5' incision. This Nitrobacter hamburgensis (strain DSM 10229 / NCIMB 13809 / X14) protein is UvrABC system protein C.